We begin with the raw amino-acid sequence, 145 residues long: UPF0763 protein WS1752 (145 aa).

The protein belongs to the UPF0763 family.

The protein is UPF0763 protein WS1752 of Wolinella succinogenes (strain ATCC 29543 / DSM 1740 / CCUG 13145 / JCM 31913 / LMG 7466 / NCTC 11488 / FDC 602W) (Vibrio succinogenes).